The following is a 667-amino-acid chain: Acyl-coenzyme A oxidase acox-3 (667 aa).

FAD is bound by residues 138–141 (FCLT), 146–147 (GS), Gly-178, Arg-313, 334–337 (QQYR), and Gly-410. Glu-433 acts as the Proton acceptor in catalysis. Residue Glu-435 coordinates FAD. A Microbody targeting signal motif is present at residues 665 to 667 (SKL).

Belongs to the acyl-CoA oxidase family. Homodimer. FAD is required as a cofactor. In terms of tissue distribution, expressed in intestine.

It is found in the peroxisome. The catalysed reaction is IC-asc-C7-CoA + O2 = IC-asc-DeltaC7-CoA + H2O2. It catalyses the reaction IC-asc-C9-CoA + O2 = IC-asc-DeltaC9-CoA + H2O2. It carries out the reaction asc-C13-CoA + O2 = asc-DeltaC13-CoA + H2O2. It functions in the pathway lipid metabolism; peroxisomal fatty acid beta-oxidation. In contrast to other acyl-coenzyme A oxidases which bind to and are activated by ATP, does not bind ATP. Functionally, involved in the first step of peroxisomal beta-oxidation by catalyzing the desaturation of fatty acid-derived side chains of ascaroside pheromones, which regulates development and behavior. Specifically, shortens indol-3-carbonyl(IC)-ascarosides with 7-carbon (IC-asc-C7) or 9-carbon (IC-asc-C9) side chains and contributes to the shortening of ascarosides with 13-carbon (asc-C13) and 15-carbon (asc-C15) side chains. This Caenorhabditis elegans protein is Acyl-coenzyme A oxidase acox-3.